The chain runs to 578 residues: Isocitrate dehydrogenase kinase/phosphatase (578 aa).

ATP contacts are provided by residues 315–321 and K336; that span reads APGIRGM. Residue D371 is part of the active site.

It belongs to the AceK family.

Its subcellular location is the cytoplasm. The catalysed reaction is L-seryl-[isocitrate dehydrogenase] + ATP = O-phospho-L-seryl-[isocitrate dehydrogenase] + ADP + H(+). Bifunctional enzyme which can phosphorylate or dephosphorylate isocitrate dehydrogenase (IDH) on a specific serine residue. This is a regulatory mechanism which enables bacteria to bypass the Krebs cycle via the glyoxylate shunt in response to the source of carbon. When bacteria are grown on glucose, IDH is fully active and unphosphorylated, but when grown on acetate or ethanol, the activity of IDH declines drastically concomitant with its phosphorylation. In Escherichia coli O157:H7, this protein is Isocitrate dehydrogenase kinase/phosphatase.